Consider the following 610-residue polypeptide: Myosin light chain kinase 2, skeletal/cardiac muscle (610 aa).

Disordered stretches follow at residues 1-168 and 196-240; these read MATE…HSPS and VSET…DTSQ. Ala-2 is modified (N-acetylalanine). 2 stretches are compositionally biased toward basic and acidic residues: residues 32 to 63 and 70 to 82; these read SEKE…KKNP and KTPE…KKGD. Gly residues predominate over residues 94–109; the sequence is SGEGDGGGGPAEGGTG. Positions 141–157 are enriched in basic and acidic residues; the sequence is GEAKAGKKAAECREAGR. A phosphoserine mark is found at Ser-160, Ser-166, and Ser-168. The Protein kinase domain maps to 299–554; sequence MNSKEALGGG…AEQCLAHPWL (256 aa). ATP-binding positions include 305 to 313 and Lys-328; that span reads LGGGKFGAV. Asp-420 serves as the catalytic Proton acceptor. Position 459 is a phosphothreonine (Thr-459). Positions 588–600 are calmodulin-binding; it reads IAVSAANRFKKIS.

The protein belongs to the protein kinase superfamily. CAMK Ser/Thr protein kinase family. May interact with centrin.

Its subcellular location is the cytoplasm. It catalyses the reaction L-seryl-[myosin light chain] + ATP = O-phospho-L-seryl-[myosin light chain] + ADP + H(+). The catalysed reaction is L-threonyl-[myosin light chain] + ATP = O-phospho-L-threonyl-[myosin light chain] + ADP + H(+). Its function is as follows. Implicated in the level of global muscle contraction and cardiac function. Phosphorylates a specific serine in the N-terminus of a myosin light chain. This is Myosin light chain kinase 2, skeletal/cardiac muscle (Mylk2) from Rattus norvegicus (Rat).